The primary structure comprises 629 residues: MQLVQLANFVLDNLVQSRIGFIVLFHCWQSDESLKFAEQFMKPIHPILVYHQFVQMRGVLNWSHLELNYMGHTQPTLAIYVDIKCDQAQDLLEEASREQIYNQHYHWLLVGNQSELEFNDLFALFNISIDADVSYVKEQIQDNNDSVAYAVYDVYNNGKIIGGQLNVTGSHEMSCDPFKCRRTRYLSSLQKRSKYGNREQLTDVVLRVATVVTXRPLTLSDDELIRFLSQENDTHIDSLARFGFHLTLILRDLLYCKMKFIFSDSWSKSDVVGGSVGAVVDQTADLTASPSLATEGRLKYLSAIIETGFFRSVCIFRTPHNAGLRGDVFLQPFSPLVWYLFGGVLSLIGVLLWITFYMECKRMQKRWRLDYLPSLLSTFLISFGAACIQSSSLIPRSAGGRLIYFALFLISFIMYNYYTSVVVSSLLSSPVKSKIKTMQQLAESSLTVGLEPLPFTKSYLNYSRLPEIHLFIKRKIESQTQNPELWLPAEQGVLRVKANPGYVYVFETSSGYAYVERYFTAQEICDLNEVLFRPEKLLYTHLHRNSTYKELFRLRFLRILETGVYRKQRSYWVHMKLHCEAQNFVITVGMEYVAPLLLMLICADILVVVILLVELAWKRFFTRPLTIHP.

The Extracellular portion of the chain corresponds to 1 to 335; it reads MQLVQLANFV…GDVFLQPFSP (335 aa). Residues N61, N112, N126, N144, N166, and N232 are each glycosylated (N-linked (GlcNAc...) asparagine). Residues 336-356 form a helical membrane-spanning segment; that stretch reads LVWYLFGGVLSLIGVLLWITF. At 357-374 the chain is on the cytoplasmic side; sequence YMECKRMQKRWRLDYLPS. A helical transmembrane segment spans residues 375–395; sequence LLSTFLISFGAACIQSSSLIP. Residues 396–402 are Extracellular-facing; it reads RSAGGRL. A helical membrane pass occupies residues 403–423; the sequence is IYFALFLISFIMYNYYTSVVV. At 424–592 the chain is on the cytoplasmic side; that stretch reads SSLLSSPVKS…NFVITVGMEY (169 aa). The helical transmembrane segment at 593–613 threads the bilayer; that stretch reads VAPLLLMLICADILVVVILLV. Topologically, residues 614-629 are extracellular; that stretch reads ELAWKRFFTRPLTIHP.

It belongs to the glutamate-gated ion channel (TC 1.A.10.1) family. As to expression, expressed in neurons in the antennal coeloconic 2 (ac2) sensillum class of sensory hairs (at protein level).

The protein localises to the cell membrane. It is found in the cell projection. Its subcellular location is the dendrite. Olfactory receptor for propionic, butyric and 2-oxopentanoic acids. The protein is Ionotropic receptor 75a of Drosophila sechellia (Fruit fly).